Consider the following 364-residue polypeptide: Methylthioribose-1-phosphate isomerase (364 aa).

Residues 51–53, Arg88, and Gln199 contribute to the substrate site; that span reads RGA. Asp240 acts as the Proton donor in catalysis. Position 250–251 (250–251) interacts with substrate; that stretch reads NK.

The protein belongs to the eIF-2B alpha/beta/delta subunits family. MtnA subfamily.

It catalyses the reaction 5-(methylsulfanyl)-alpha-D-ribose 1-phosphate = 5-(methylsulfanyl)-D-ribulose 1-phosphate. Its pathway is amino-acid biosynthesis; L-methionine biosynthesis via salvage pathway; L-methionine from S-methyl-5-thio-alpha-D-ribose 1-phosphate: step 1/6. Functionally, catalyzes the interconversion of methylthioribose-1-phosphate (MTR-1-P) into methylthioribulose-1-phosphate (MTRu-1-P). This Cereibacter sphaeroides (strain KD131 / KCTC 12085) (Rhodobacter sphaeroides) protein is Methylthioribose-1-phosphate isomerase.